The chain runs to 780 residues: Nuclear cap-binding protein subunit 1 (780 aa).

Residues 1-25 (MSSYRGSTRPRKRTREGENYGFRPH) are disordered. Ser29 is modified (phosphoserine). The MIF4G domain maps to 34-249 (AARIKKDITF…KQLILSREND (216 aa)). The disordered stretch occupies residues 738–780 (ANEPVQENTSEEQEDTKMQPVDAVDEQPSENNQTAADATNEEK).

Belongs to the NCBP1 family. In terms of assembly, component of the nuclear cap-binding complex (CBC), a heterodimer composed of cbc1 and cbc2 that interacts with capped RNAs.

It localises to the cytoplasm. It is found in the perinuclear region. The protein resides in the nucleus. Component of the CBC complex, which binds cotranscriptionally to the 5'-cap of pre-mRNAs and is involved in maturation, export and degradation of nuclear mRNAs. This is Nuclear cap-binding protein subunit 1 (cbc1) from Schizosaccharomyces pombe (strain 972 / ATCC 24843) (Fission yeast).